A 912-amino-acid chain; its full sequence is Receptor protein kinase WSS1 (912 aa).

Residues 1 to 27 (MGRDARRLPLLPFLLLLLAAAAGVAES) form the signal peptide. The Extracellular portion of the chain corresponds to 28–477 (ATDAEAIHDL…AGGGKSKPNT (450 aa)). LRR repeat units lie at residues 64-88 (AGKVTELNLADRGLSGTLPDSLSSL), 89-111 (TSLTALQLQGNALTGAVPSLARM), and 112-134 (GSLARLALDGNAFTSLPPDFLHG). N-linked (GlcNAc...) asparagine glycans are attached at residues N159, N170, N196, N256, N286, N371, N376, N387, and N400. LRR repeat units follow at residues 184–208 (LVSLRNLRLSYNNLTGGLPPELSSL), 235–261 (MKSLKLLWIQSNKFTGPIPDLNGTQLE), 281–303 (LMSLKNVSLSNNNFQGPKPAFAA), 364–388 (SSDVSMINLSRKNLSGRISPALANL), 389–411 (TRLARLDLSNNNLTGVIPDVLTT), and 413–438 (PSLTVLNVANNRLTGEVPKFKPSVNV). The interval 448–472 (SSGSSGGGGGSDGDSSSSDSAGGGK) is disordered. A helical transmembrane segment spans residues 478-498 (GMIIGIIVAVIILFACIALLV). Residues 499 to 912 (HHRKKKNVEK…SFNVPRKYNG (414 aa)) are Cytoplasmic-facing. Residues 580–859 (FSEDCILGRG…HCVNRLSSLV (280 aa)) enclose the Protein kinase domain. ATP-binding positions include 586 to 594 (LGRGGFGVV) and K607. The active-site Proton acceptor is the D708.

This sequence belongs to the protein kinase superfamily. Ser/Thr protein kinase family. The cofactor is Mn(2+). As to expression, expressed in young and mature leaves.

It localises to the cell membrane. It catalyses the reaction L-seryl-[protein] + ATP = O-phospho-L-seryl-[protein] + ADP + H(+). The catalysed reaction is L-threonyl-[protein] + ATP = O-phospho-L-threonyl-[protein] + ADP + H(+). Functionally, transmembrane kinase receptor involved in the regulation of reactive oxygen species (ROS) homeostasis, chloroplast development and leaf senescence. This is Receptor protein kinase WSS1 from Oryza sativa subsp. japonica (Rice).